Consider the following 141-residue polypeptide: Large ribosomal subunit protein uL11 (141 aa).

It belongs to the universal ribosomal protein uL11 family. Part of the ribosomal stalk of the 50S ribosomal subunit. Interacts with L10 and the large rRNA to form the base of the stalk. L10 forms an elongated spine to which L12 dimers bind in a sequential fashion forming a multimeric L10(L12)X complex. One or more lysine residues are methylated.

In terms of biological role, forms part of the ribosomal stalk which helps the ribosome interact with GTP-bound translation factors. The sequence is that of Large ribosomal subunit protein uL11 from Campylobacter lari (strain RM2100 / D67 / ATCC BAA-1060).